The chain runs to 517 residues: Probable bifunctional methylthioribulose-1-phosphate dehydratase/enolase-phosphatase E1 (517 aa).

Residues methionine 1 to aspartate 242 form a methylthioribulose-1-phosphate dehydratase region. Cysteine 114 serves as a coordination point for substrate. Zn(2+)-binding residues include histidine 132 and histidine 134. Catalysis depends on glutamate 157, which acts as the Proton donor/acceptor; for methylthioribulose-1-phosphate dehydratase activity. Histidine 207 provides a ligand contact to Zn(2+). The tract at residues valine 278–isoleucine 517 is enolase-phosphatase E1. Aspartate 281 and glutamate 283 together coordinate Mg(2+). Substrate-binding positions include serine 416 to serine 417 and lysine 450. Residue aspartate 476 participates in Mg(2+) binding.

In the N-terminal section; belongs to the aldolase class II family. MtnB subfamily. This sequence in the C-terminal section; belongs to the HAD-like hydrolase superfamily. MasA/MtnC family. Zn(2+) is required as a cofactor. It depends on Mg(2+) as a cofactor.

The catalysed reaction is 5-(methylsulfanyl)-D-ribulose 1-phosphate = 5-methylsulfanyl-2,3-dioxopentyl phosphate + H2O. It catalyses the reaction 5-methylsulfanyl-2,3-dioxopentyl phosphate + H2O = 1,2-dihydroxy-5-(methylsulfanyl)pent-1-en-3-one + phosphate. The protein operates within amino-acid biosynthesis; L-methionine biosynthesis via salvage pathway; L-methionine from S-methyl-5-thio-alpha-D-ribose 1-phosphate: step 2/6. It functions in the pathway amino-acid biosynthesis; L-methionine biosynthesis via salvage pathway; L-methionine from S-methyl-5-thio-alpha-D-ribose 1-phosphate: step 3/6. It participates in amino-acid biosynthesis; L-methionine biosynthesis via salvage pathway; L-methionine from S-methyl-5-thio-alpha-D-ribose 1-phosphate: step 4/6. This Sorghum bicolor (Sorghum) protein is Probable bifunctional methylthioribulose-1-phosphate dehydratase/enolase-phosphatase E1.